A 301-amino-acid polypeptide reads, in one-letter code: MLRLRCKAKNGTHLMQGLTHQSCVQELKDKIEELTGIPCDVQKIMVGYPPSSLDLRNGEAHLKDYPIKSGDTLIVEEEKNKPKPPVQPTVTKGPSFEVTPVVERRVVPADNSCLFTSVNYVMEGGVYDPACASEMRGLIAQIVASDPTAYSEAVLGKTNEEYCTWIRRDDTWGGAIEVSILSKFYQCEICVVDTQTVRVDRFGEDAGYTKRVLLIYDGIHYDPLQKVLPGSDVPAQTVFSTVDDVILAQALELADEARRKRQFTDVNRFALRCMVCQTGLVGQKEAREHAKETGHTNFGEV.

The interval 5 to 83 is UBX-like; it reads RCKAKNGTHL…IVEEEKNKPK (79 aa). The OTU domain occupies 102-227; sequence VERRVVPADN…GIHYDPLQKV (126 aa). The segment at 107–113 is cys-loop; that stretch reads VPADNSC. The active site involves D110. The Nucleophile role is filled by C113. The interval 166 to 176 is variable-loop; it reads IRRDDTWGGAI. Residues 216–220 form a his-loop region; the sequence is YDGIH. A substrate-binding site is contributed by I219. H220 is an active-site residue. The tract at residues 244–249 is S2 site; it reads DVILAQ. The C2H2-type zinc-finger motif lies at 271–295; the sequence is LRCMVCQTGLVGQKEAREHAKETGH. H295 is an active-site residue.

It localises to the cytoplasm. The catalysed reaction is Thiol-dependent hydrolysis of ester, thioester, amide, peptide and isopeptide bonds formed by the C-terminal Gly of ubiquitin (a 76-residue protein attached to proteins as an intracellular targeting signal).. Hydrolase that can remove conjugated ubiquitin from proteins and participates in endoplasmic reticulum-associated degradation (ERAD) for misfolded lumenal proteins. May act by triming the ubiquitin chain on the associated substrate to facilitate their threading through the VCP/p97 pore. Ubiquitin moieties on substrates may present a steric impediment to the threading process when the substrate is transferred to the VCP pore and threaded through VCP's axial channel. Mediates deubiquitination of 'Lys-27'-, 'Lys-29'- and 'Lys-33'-linked polyubiquitin chains. Also able to hydrolyze 'Lys-11'-linked ubiquitin chains. Cleaves both polyubiquitin and di-ubiquitin. The polypeptide is Ubiquitin thioesterase OTU1 (yod1) (Danio rerio (Zebrafish)).